We begin with the raw amino-acid sequence, 198 residues long: MICOS complex subunit MIC26 (198 aa).

The first 25 residues, 1-25, serve as a signal peptide directing secretion; the sequence is MFKVIQRSVGPASLSLLTFKVYAAP. The chain crosses the membrane as a helical span at residues 108 to 128; that stretch reads PGFFPRLGVIGFAGLIGLLLA. Residue S162 is glycosylated (O-linked (Xyl...) (chondroitin sulfate) serine).

This sequence belongs to the apolipoprotein O/MICOS complex subunit Mic27 family. As to quaternary structure, component of the mitochondrial contact site and cristae organizing system (MICOS) complex, composed of at least MICOS10/MIC10, CHCHD3/MIC19, CHCHD6/MIC25, APOOL/MIC27, IMMT/MIC60, APOO/MIC23/MIC26 and MICOS13/MIC13. This complex was also known under the names MINOS or MitOS complex. he MICOS complex associates with mitochondrial outer membrane proteins SAMM50, MTX1 and MTX2 (together described as components of the mitochondrial outer membrane sorting assembly machinery (SAM) complex) and DNAJC11, mitochondrial inner membrane protein TMEM11 and with HSPA9. The MICOS and SAM complexes together with DNAJC11 are part of a large protein complex spanning both membranes termed the mitochondrial intermembrane space bridging (MIB) complex. Interacts with IMMT/MIC60. Interacts with MICOS10/MIC10 and APOOL/MIC27. Post-translationally, O-glycosylation; glycosaminoglycan of chondroitin-sulfate type. In terms of tissue distribution, expressed in all tissues examined. Up-regulated in diabetic heart.

It localises to the mitochondrion inner membrane. It is found in the secreted. The protein resides in the mitochondrion. Its subcellular location is the golgi apparatus membrane. The protein localises to the endoplasmic reticulum membrane. In terms of biological role, component of the MICOS complex, a large protein complex of the mitochondrial inner membrane that plays crucial roles in the maintenance of crista junctions, inner membrane architecture, and formation of contact sites to the outer membrane. Plays a crucial role in crista junction formation and mitochondrial function. Can promote cardiac lipotoxicity by enhancing mitochondrial respiration and fatty acid metabolism in cardiac myoblasts. Promotes cholesterol efflux from macrophage cells. Detected in HDL, LDL and VLDL. Secreted by a microsomal triglyceride transfer protein (MTTP)-dependent mechanism, probably as a VLDL-associated protein that is subsequently transferred to HDL. The polypeptide is MICOS complex subunit MIC26 (APOO) (Homo sapiens (Human)).